The following is a 3640-amino-acid chain: Serine/threonine-protein kinase SMG1 (3640 aa).

Residues 21 to 34 (NDWQPRSDSLSASQ) are compositionally biased toward polar residues. The interval 21–41 (NDWQPRSDSLSASQDGVKCSV) is disordered. One can recognise an FAT domain in the interval 1495–1843 (YCHSGKCELA…LYPAIVGSIS (349 aa)). An HEAT repeat occupies 1794–1829 (APWRGIIPQLFSRLNHPEAYIRQSICSLLCRVAQDS). The segment at 1870–1890 (GLCGGESETGSGPTSQESSRG) is disordered. Over residues 1874-1887 (GESETGSGPTSQES) the composition is skewed to low complexity. Residues 2102–2441 (VGNTITILPT…MERDITRSLF (340 aa)) enclose the PI3K/PI4K catalytic domain. The segment at 2108-2114 (ILPTKTK) is G-loop. The catalytic loop stretch occupies residues 2310 to 2318 (GLGDRHLDN). Positions 2330–2354 (HIDYNVCFEKGKSLRVPEKVPFRMT) are activation loop. One can recognise an FATC domain in the interval 3608–3640 (RRMSVTEQVDYVIKEATNVDNLAQLYEGWTAWV).

Belongs to the PI3/PI4-kinase family. The cofactor is Mn(2+). In terms of processing, autophosphorylated.

Its subcellular location is the nucleus. It is found in the cytoplasm. It carries out the reaction L-seryl-[protein] + ATP = O-phospho-L-seryl-[protein] + ADP + H(+). The catalysed reaction is L-threonyl-[protein] + ATP = O-phospho-L-threonyl-[protein] + ADP + H(+). Its function is as follows. Serine/threonine protein kinase involved in both mRNA surveillance and genotoxic stress response pathways. Recognizes the substrate consensus sequence [ST]-Q. Plays a central role in nonsense-mediated decay (NMD) of mRNAs containing premature stop codons by phosphorylating UPF1/RENT1. This is Serine/threonine-protein kinase SMG1 from Danio rerio (Zebrafish).